The following is a 253-amino-acid chain: 28 kDa inner dynein arm light chain, axonemal (253 aa).

The disordered stretch occupies residues 19-44; sequence TSKDKGKGAKGTPGKKGALPPVEQKP. Positions 160 to 239 form a coiled coil; the sequence is IRKALQTEQG…LKQQLETFLV (80 aa).

It belongs to the inner dynein arm light chain family.

The protein resides in the cytoplasm. It is found in the cytoskeleton. It localises to the flagellum axoneme. Plays a dynamic role in flagellar motility. May be necessary for stable assembly of a subset of inner dynein arms or for the binding of these arms to the outer doublet microtubules of the axoneme. The chain is 28 kDa inner dynein arm light chain, axonemal (IDA4) from Chlamydomonas reinhardtii (Chlamydomonas smithii).